The primary structure comprises 141 residues: SsrA-binding protein (141 aa).

The protein belongs to the SmpB family.

The protein localises to the cytoplasm. Functionally, required for rescue of stalled ribosomes mediated by trans-translation. Binds to transfer-messenger RNA (tmRNA), required for stable association of tmRNA with ribosomes. tmRNA and SmpB together mimic tRNA shape, replacing the anticodon stem-loop with SmpB. tmRNA is encoded by the ssrA gene; the 2 termini fold to resemble tRNA(Ala) and it encodes a 'tag peptide', a short internal open reading frame. During trans-translation Ala-aminoacylated tmRNA acts like a tRNA, entering the A-site of stalled ribosomes, displacing the stalled mRNA. The ribosome then switches to translate the ORF on the tmRNA; the nascent peptide is terminated with the 'tag peptide' encoded by the tmRNA and targeted for degradation. The ribosome is freed to recommence translation, which seems to be the essential function of trans-translation. This is SsrA-binding protein from Ureaplasma parvum serovar 3 (strain ATCC 27815 / 27 / NCTC 11736).